The primary structure comprises 428 residues: CinA-like protein (428 aa).

Belongs to the CinA family.

This Endomicrobium trichonymphae protein is CinA-like protein.